The chain runs to 492 residues: Tyrosine--tRNA ligase, mitochondrial (492 aa).

Residue tyrosine 89 coordinates L-tyrosine. An ATP-binding site is contributed by aspartate 93. Residues 94-103 (PTAQSLHLGN) carry the 'HIGH' region motif. Residues aspartate 133, tyrosine 239, glutamine 243, aspartate 246, and glutamine 265 each coordinate L-tyrosine. Positions 303–307 (KFGKS) match the 'KMSKS' region motif. ATP is bound at residue lysine 306.

Belongs to the class-I aminoacyl-tRNA synthetase family. Homodimer.

The protein localises to the mitochondrion matrix. It catalyses the reaction tRNA(Tyr) + L-tyrosine + ATP = L-tyrosyl-tRNA(Tyr) + AMP + diphosphate + H(+). Catalyzes the attachment of tyrosine to tRNA(Tyr) in a two-step reaction: tyrosine is first activated by ATP to form Tyr-AMP and then transferred to the acceptor end of tRNA(Tyr). The sequence is that of Tyrosine--tRNA ligase, mitochondrial (MSY1) from Saccharomyces cerevisiae (strain ATCC 204508 / S288c) (Baker's yeast).